Consider the following 212-residue polypeptide: Uridine kinase (212 aa).

Gly12–Thr19 is a binding site for ATP.

Belongs to the uridine kinase family.

The protein resides in the cytoplasm. The catalysed reaction is uridine + ATP = UMP + ADP + H(+). It carries out the reaction cytidine + ATP = CMP + ADP + H(+). It functions in the pathway pyrimidine metabolism; CTP biosynthesis via salvage pathway; CTP from cytidine: step 1/3. The protein operates within pyrimidine metabolism; UMP biosynthesis via salvage pathway; UMP from uridine: step 1/1. The polypeptide is Uridine kinase (Streptococcus pneumoniae serotype 19F (strain G54)).